Here is an 838-residue protein sequence, read N- to C-terminus: U1 SNP1-associating protein 1 (838 aa).

Residues M1–L536 are Cytoplasmic-facing. The segment at H31–F240 is required for ERAD-L function. Residues E259 to N318 enclose the Ubiquitin-like domain. The tract at residues N319–C418 is important for HRD1 oligomer formation. An interaction with HRD1 region spans residues Q345 to P535. Residues S374, S376, and S379 each carry the phosphoserine modification. The tract at residues S437 to S490 is required for ERAD-L function and HRD1 oligomer formation. Residues L537–L559 traverse the membrane as a helical segment. Residues E560 to S563 lie on the Extracellular side of the membrane. A helical membrane pass occupies residues F564–W583. At N584–D838 the chain is on the cytoplasmic side. Positions N584–D838 are interaction with DER1. The interval A795 to D838 is disordered. Residues E809 to P823 show a composition bias toward acidic residues.

As to quaternary structure, component of the HRD1 ubiquitin ligase complex which contains the E3 ligase HRD1, its cofactors HRD3, USA1 and DER1, substrate recruiting factor YOS9 and CDC48-binding protein UBX2. Within the complex, interacts directly with HRD1 (via N-terminus) and DER1 (via C-terminus) and indirectly with HRD3. In ERAD-L, HRD3 and YOS9 jointly bind misfolded glycoproteins in the endoplasmic reticulum (ER) lumen. Movement of ERAD-L substrates through the ER membrane is facilitated by HRD1 and DER1 which have lateral gates facing each other and which distort the membrane region between the lateral gates, making it much thinner than a normal phospholipid bilayer. Substrates insert into the membrane as a hairpin loop with one strand interacting with DER1 and the other with HRD1. The HRD1 complex interacts with the heterotrimeric CDC48-NPL4-UFD1 ATPase complex which is recruited by UBX2 via its interaction with CDC48 and which moves ubiquitinated substrates to the cytosol for targeting to the proteasome.

The protein resides in the endoplasmic reticulum membrane. Its function is as follows. Scaffold protein of the endoplasmic reticulum-associated degradation (ERAD) (also known as endoplasmic reticulum quality control, ERQC) pathway involved in ubiquitin-dependent degradation of misfolded endoplasmic reticulum proteins. Component of the HRD1 ubiquitin ligase complex, which is part of the ERAD-L and ERAD-M pathways responsible for the rapid degradation of soluble lumenal and membrane proteins with misfolded lumenal domains (ERAD-L), or ER-membrane proteins with misfolded transmembrane domains (ERAD-M). Has multiple functions in ERAD including recruitment of DER1 to the HRD1 ubiquitin ligase, and regulation of HRD1 activity. Involved in oligomerization of HRD1 and in HRD1 autoubiquitination and degradation. In Saccharomyces cerevisiae (strain ATCC 204508 / S288c) (Baker's yeast), this protein is U1 SNP1-associating protein 1 (USA1).